An 89-amino-acid chain; its full sequence is Small ribosomal subunit protein uS15 (89 aa).

It belongs to the universal ribosomal protein uS15 family. In terms of assembly, part of the 30S ribosomal subunit. Forms a bridge to the 50S subunit in the 70S ribosome, contacting the 23S rRNA.

In terms of biological role, one of the primary rRNA binding proteins, it binds directly to 16S rRNA where it helps nucleate assembly of the platform of the 30S subunit by binding and bridging several RNA helices of the 16S rRNA. Its function is as follows. Forms an intersubunit bridge (bridge B4) with the 23S rRNA of the 50S subunit in the ribosome. This chain is Small ribosomal subunit protein uS15, found in Lactococcus lactis subsp. lactis (strain IL1403) (Streptococcus lactis).